The sequence spans 149 residues: Transthyretin (149 aa).

The signal sequence occupies residues 1–20 (MAFHSLLLLCLAGLLFVSEA). Sulfocysteine is present on cysteine 32. L-thyroxine is bound at residue lysine 37. Residue glutamate 64 is modified to 4-carboxyglutamate. Residues glutamate 76 and serine 139 each contribute to the L-thyroxine site.

It belongs to the transthyretin family. As to quaternary structure, homotetramer. Dimer of dimers. In the homotetramer, subunits assemble around a central channel that can accommodate two ligand molecules. Interacts with RBP4. Sulfonation of the reactive cysteine Cys-32 enhances the stability of the native conformation of TTR, avoiding misassembly of the protein leading to amyloid formation. As to expression, detected in plasma (at protein level). Detected in liver.

It is found in the secreted. Its function is as follows. Thyroid hormone-binding protein. Probably transports thyroxine from the bloodstream to the brain. This is Transthyretin (TTR) from Petaurus breviceps (Australian sugar glider).